The sequence spans 335 residues: Geranylgeranyl pyrophosphate synthase BTS1 (335 aa).

Lys-36, Arg-39, and His-68 together coordinate isopentenyl diphosphate. Residues Asp-75 and Asp-79 each coordinate Mg(2+). Dimethylallyl diphosphate is bound at residue Arg-84. Arg-85 is an isopentenyl diphosphate binding site. Lys-169, Thr-170, Gln-206, Asn-213, Lys-223, and Lys-233 together coordinate dimethylallyl diphosphate.

It belongs to the FPP/GGPP synthase family. It depends on Mg(2+) as a cofactor.

It is found in the cytoplasm. The enzyme catalyses isopentenyl diphosphate + dimethylallyl diphosphate = (2E)-geranyl diphosphate + diphosphate. It catalyses the reaction isopentenyl diphosphate + (2E)-geranyl diphosphate = (2E,6E)-farnesyl diphosphate + diphosphate. The catalysed reaction is isopentenyl diphosphate + (2E,6E)-farnesyl diphosphate = (2E,6E,10E)-geranylgeranyl diphosphate + diphosphate. The protein operates within isoprenoid biosynthesis; farnesyl diphosphate biosynthesis; farnesyl diphosphate from geranyl diphosphate and isopentenyl diphosphate: step 1/1. It participates in isoprenoid biosynthesis; geranyl diphosphate biosynthesis; geranyl diphosphate from dimethylallyl diphosphate and isopentenyl diphosphate: step 1/1. Its pathway is isoprenoid biosynthesis; geranylgeranyl diphosphate biosynthesis; geranylgeranyl diphosphate from farnesyl diphosphate and isopentenyl diphosphate: step 1/1. Its function is as follows. Catalyzes the trans-addition of the 3 molecules of IPP onto DMAPP to form geranylgeranyl pyrophosphate. Required for the membrane attachment of YPT1 and SEC4. May be involved in vesicle trafficking and protein sorting. The chain is Geranylgeranyl pyrophosphate synthase BTS1 (BTS1) from Saccharomyces cerevisiae (strain ATCC 204508 / S288c) (Baker's yeast).